The following is a 194-amino-acid chain: Mpv17-like protein (194 aa).

Over 1–14 the chain is Cytoplasmic; the sequence is MASWWRAFPQAARR. A helical transmembrane segment spans residues 15–34; sequence YPWPTNVLLYAGLFSAGDAL. The targeting to peroxisomes stretch occupies residues 16–55; the sequence is PWPTNVLLYAGLFSAGDALQQRLRGGPADWRQTRRVATLA. Residues 35-50 are Lumenal-facing; the sequence is QQRLRGGPADWRQTRR. A helical membrane pass occupies residues 51–67; the sequence is VATLAVTFHGNFNYVWL. Topologically, residues 68–91 are cytoplasmic; that stretch reads RLLERALPGRAPRTVLAKVLCDQT. Residues 92–110 form a helical membrane-spanning segment; the sequence is VGGPIALSAFYVGMSVLQG. At 111–150 the chain is on the lumenal side; the sequence is KDDIFLDLKQKFWNTYKSGLMYWPFVQLTNFSLVPVHWRT. Residues 151-168 traverse the membrane as a helical segment; the sequence is AYTGLCAFLWATFLCFSQ. The Cytoplasmic segment spans residues 169–194; it reads QSGDGTLQSIFIFLRRKEASDKSPEK.

This sequence belongs to the peroxisomal membrane protein PXMP2/4 family. In terms of tissue distribution, isoform 1 and isoform 3 are expressed in the kidney (at protein level). Isoform 1 is expressed in the kidney, spleen, heart, brain, lung and liver. Isoform 3 is expressed in the kidney. Isoform 1 and isoform 3 expression increase during development, reache their highest level in adulthood and decrease with aging.

It localises to the peroxisome membrane. The protein resides in the cytoplasm. Its function is as follows. Participates in reactive oxygen species metabolism by up- or down-regulation of the genes of antioxidant enzymes. Protective against the mitochondrial apoptotic cascade. In terms of biological role, participates in reactive oxygen species metabolism by up- or down-regulation of the genes of antioxidant enzymes. The sequence is that of Mpv17-like protein (Mpv17l) from Mus musculus (Mouse).